Consider the following 146-residue polypeptide: Large ribosomal subunit protein uL15 (146 aa).

A compositionally biased stretch (basic and acidic residues) spans 1–18 (MKLHELKPSEGSRKERNR). The interval 1-50 (MKLHELKPSEGSRKERNRVGRGTGSGNGKTSGRGHKGQKARSGGGVRLGF) is disordered. Positions 21–31 (RGTGSGNGKTS) are enriched in gly residues.

This sequence belongs to the universal ribosomal protein uL15 family. As to quaternary structure, part of the 50S ribosomal subunit.

In terms of biological role, binds to the 23S rRNA. The polypeptide is Large ribosomal subunit protein uL15 (Listeria monocytogenes serotype 4b (strain CLIP80459)).